We begin with the raw amino-acid sequence, 630 residues long: Mesothelin (630 aa).

The N-terminal stretch at 1–36 (MALPTARPLLGSCGTPALGSLLFLLFSLGWVQPSRT) is a signal peptide. A glycan (N-linked (GlcNAc...) asparagine) is linked at Asn57. A Phosphoserine; by FAM20C modification is found at Ser200. The interval 262–286 (SIPQGIVAAWRQRSSRDPSWRQPER) is required for megakaryocyte-potentiating factor activity. An intrachain disulfide couples Cys302 to Cys326. N-linked (GlcNAc...) asparagine glycans are attached at residues Asn388, Asn496, and Asn523. A lipid anchor (GPI-anchor amidated serine) is attached at Ser606. Residues 607–630 (GTPCLLGPGPVLTVLALLLASTLA) constitute a propeptide, removed in mature form.

The protein belongs to the mesothelin family. Interacts with MUC16. Post-translationally, both MPF and the cleaved form of mesothelin are N-glycosylated. Proteolytically cleaved by a furin-like convertase to generate megakaryocyte-potentiating factor (MPF), and the cleaved form of mesothelin. As to expression, expressed in lung. Expressed at low levels in heart, placenta and kidney. Expressed in mesothelial cells. Highly expressed in mesotheliomas, ovarian cancers, and some squamous cell carcinomas (at protein level).

The protein localises to the cell membrane. It localises to the golgi apparatus. Its subcellular location is the secreted. In terms of biological role, membrane-anchored forms may play a role in cellular adhesion. Functionally, megakaryocyte-potentiating factor (MPF) potentiates megakaryocyte colony formation in vitro. The polypeptide is Mesothelin (MSLN) (Homo sapiens (Human)).